A 97-amino-acid chain; its full sequence is MAHKKGASSSRNGRDSTSKRLGVKRFGGQFVHAGEILVRQRGTRFHPGSGVGRGGDDTLFALVSGAVTFGTARGRRVVSVVPAQPAATPAQPAATGS.

The interval 1 to 23 (MAHKKGASSSRNGRDSTSKRLGV) is disordered.

This sequence belongs to the bacterial ribosomal protein bL27 family.

This Acidothermus cellulolyticus (strain ATCC 43068 / DSM 8971 / 11B) protein is Large ribosomal subunit protein bL27.